Here is a 364-residue protein sequence, read N- to C-terminus: MLIFPLINDTSRKIIHIDMDAFFAAVEERDNPALKGKPVVIGKDPRETGGRGVVSTCNYEARKYGIHSAMSSKEAYERCPKAIFISGNYEKYRTVGDQIRRIFKRYTDLVEPMSIDEAYLDVTDNKLGIKSAVKIAKLIQHDIWKEVGLTCSAGVSYNKFLAKLASDFEKPHGLTLVLKEDALCFLAKLPIEKFHGVGKKSVEKLHDMGIYTGQDLLAVPEMTLIDHFGRFGFDLYRKARGISNSPVKSDRIRKSIGSERTYAKLLYQETDIKAEISKNAKRVAALLQDHKKLGKTIVLKVRYADFTTLTKRVTLPELTRNAAQIEQVAGDIFDSLSENPAGIRLLGVTMTNLEDKVADISLNL.

The 185-residue stretch at 14-198 (IIHIDMDAFF…LPIEKFHGVG (185 aa)) folds into the UmuC domain. Asp-18 and Asp-116 together coordinate Mg(2+). Residue Glu-117 is part of the active site.

Belongs to the DNA polymerase type-Y family. As to quaternary structure, monomer. The cofactor is Mg(2+).

The protein resides in the cytoplasm. The enzyme catalyses DNA(n) + a 2'-deoxyribonucleoside 5'-triphosphate = DNA(n+1) + diphosphate. Its function is as follows. Poorly processive, error-prone DNA polymerase involved in untargeted mutagenesis. Copies undamaged DNA at stalled replication forks, which arise in vivo from mismatched or misaligned primer ends. These misaligned primers can be extended by PolIV. Exhibits no 3'-5' exonuclease (proofreading) activity. May be involved in translesional synthesis, in conjunction with the beta clamp from PolIII. This is DNA polymerase IV from Streptococcus pyogenes serotype M5 (strain Manfredo).